We begin with the raw amino-acid sequence, 337 residues long: MNSWDAGLAGLLVGTIGVSLLSNGLVLLCLLHSADIRRQAPALFTLNLTCGNLLCTVVNMPLTLAGVVAQRQPAGDRLCRLAAFLDTFLAANSMLSMAALSIDRWVAVVFPLSYRAKMRLRDAAFMVAYTWLHALTFPATALALSWLGFHQLYASCTLCSRRPDERLRFAVFTSAFHALSFLLSFIVLCFTYLKVLKVARFHCKRIDVITMQTLVLLVDIHPSVRERCLEEQKRRRQRATKKISTFIGTFLVCFAPYVITRLVELFSTAPIGSHWGVLSKCLAYSKAASDPFVYSLLRHQYRRSCKELLNRIFNRRSLHSVGLTGDSHSQNILPVSE.

The Extracellular segment spans residues 1-10 (MNSWDAGLAG). Residues 11-31 (LLVGTIGVSLLSNGLVLLCLL) traverse the membrane as a helical segment. Residues 32-47 (HSADIRRQAPALFTLN) are Cytoplasmic-facing. The chain crosses the membrane as a helical span at residues 48-68 (LTCGNLLCTVVNMPLTLAGVV). Topologically, residues 69–81 (AQRQPAGDRLCRL) are extracellular. A disulfide bridge connects residues C79 and C156. The helical transmembrane segment at 82-102 (AAFLDTFLAANSMLSMAALSI) threads the bilayer. The Cytoplasmic segment spans residues 103–123 (DRWVAVVFPLSYRAKMRLRDA). The chain crosses the membrane as a helical span at residues 124 to 144 (AFMVAYTWLHALTFPATALAL). Residues 145–168 (SWLGFHQLYASCTLCSRRPDERLR) lie on the Extracellular side of the membrane. The chain crosses the membrane as a helical span at residues 169–189 (FAVFTSAFHALSFLLSFIVLC). Residues 190 to 245 (FTYLKVLKVARFHCKRIDVITMQTLVLLVDIHPSVRERCLEEQKRRRQRATKKIST) lie on the Cytoplasmic side of the membrane. Residues 246-266 (FIGTFLVCFAPYVITRLVELF) traverse the membrane as a helical segment. The Extracellular segment spans residues 267 to 276 (STAPIGSHWG). Residues 277–297 (VLSKCLAYSKAASDPFVYSLL) traverse the membrane as a helical segment. At 298–337 (RHQYRRSCKELLNRIFNRRSLHSVGLTGDSHSQNILPVSE) the chain is on the cytoplasmic side.

This sequence belongs to the G-protein coupled receptor 1 family. As to expression, exclusively expressed in the brain. Prominent expression is detected throughout the entire neocortex at all rostrocaudal and dorsoventral levels. Strong expression is detected in olfactory and auditory sensory areas.

It localises to the cell membrane. Orphan receptor. Displays a significant level of constitutive activity. Its effect is mediated by G(s)-alpha protein that stimulate adenylate cyclase, resulting in an elevation of intracellular cAMP. This Mus musculus (Mouse) protein is G-protein coupled receptor 26 (Gpr26).